The following is a 151-amino-acid chain: MATLEQKLQELLQSSVEDLGCELWGIECQRAGRYLTVRLYIDKEGGVTVEDCADVSRQVSAILDVEDPIADKYNLEVSSPGLDRALFTLDQYQRYIGQEIVVHLRIPVLDRRKWQGKLEKIENDMLTLIVDGQEQILVFGNIQKANIIPKF.

The protein belongs to the RimP family.

It localises to the cytoplasm. In terms of biological role, required for maturation of 30S ribosomal subunits. The sequence is that of Ribosome maturation factor RimP from Pasteurella multocida (strain Pm70).